The primary structure comprises 159 residues: Phosphopantetheine adenylyltransferase (159 aa).

Ser-8 is a substrate binding site. Residues 8-9 (SF) and His-16 contribute to the ATP site. Substrate is bound by residues Lys-40, Thr-72, and Arg-86. ATP is bound by residues 87–89 (GLR), Glu-97, and 122–128 (HSFVSSS).

It belongs to the bacterial CoaD family. Homohexamer. Requires Mg(2+) as cofactor.

It localises to the cytoplasm. It catalyses the reaction (R)-4'-phosphopantetheine + ATP + H(+) = 3'-dephospho-CoA + diphosphate. It participates in cofactor biosynthesis; coenzyme A biosynthesis; CoA from (R)-pantothenate: step 4/5. Reversibly transfers an adenylyl group from ATP to 4'-phosphopantetheine, yielding dephospho-CoA (dPCoA) and pyrophosphate. The chain is Phosphopantetheine adenylyltransferase from Synechococcus sp. (strain JA-2-3B'a(2-13)) (Cyanobacteria bacterium Yellowstone B-Prime).